The following is a 462-amino-acid chain: DEK domain-containing chromatin-associated protein 1 (462 aa).

2 disordered regions span residues 18–91 (AVTE…TQGR) and 212–390 (KETK…RKEL). A compositionally biased stretch (basic and acidic residues) spans 20–32 (TEKDTETKKKDEV). The span at 33 to 46 (EKDEAMEEKGEEID) shows a compositional bias: acidic residues. Polar residues predominate over residues 77 to 91 (PRSSGNKPLSITQGR). The segment covering 267–276 (NGEDDVAPEE) has biased composition (acidic residues). 3 stretches are compositionally biased toward basic and acidic residues: residues 277–303 (ENNK…TDKK), 312–322 (EKPAAEEEKSI), and 347–360 (QKVD…EKGK). The short motif at 344-351 (SKKQKVDK) is the Nuclear localization signal element. A DEK-C domain is found at 384-439 (EPTRKELHVVVTKILKEVDFNTATLSDILRKLGSHFGIDLMHRKAEVKDIITDAIN). DNA-binding regions lie at residues 402-416 (DFNT…RKLG) and 431-435 (KDIIT). The interval 438–462 (INEMSDDDDEKEEDTEDEGEKEGKD) is disordered. Residues 441-462 (MSDDDDEKEEDTEDEGEKEGKD) show a composition bias toward acidic residues.

Found in a mRNA splicing-dependent exon junction complex (EJC). Binds specifically histones H3 and H4.

The protein localises to the nucleus. It is found in the nucleolus. Functionally, chromatin-associated protein which contributes to the modulation of chromatin structure (such as super-helical structure of DNA) and function. Binds to chromatin of protein-coding genes throughout the genome to regulate nucleosome occupancy and chromatin accessibility, and to modulate the expression of target genes. The sequence is that of DEK domain-containing chromatin-associated protein 1 from Arabidopsis thaliana (Mouse-ear cress).